We begin with the raw amino-acid sequence, 196 residues long: Pycsar effector protein GmPycTM (196 aa).

Helical transmembrane passes span 34–54, 82–102, and 176–196; these read ISFS…SGII, ITTI…TYLF, and VNWL…FLFL.

It localises to the cell inner membrane. Its function is as follows. Pycsar (pyrimidine cyclase system for antiphage resistance) provides immunity against bacteriophage. The pyrimidine cyclase (PycC) synthesizes cyclic nucleotides in response to infection; these serve as specific second messenger signals. The signals activate the adjacent effector, leading to bacterial cell death and abortive phage infection. A clade C Pycsar system. In terms of biological role, the effector gene of a two-gene Pycsar system. Expression of this and adjacent uridylate cyclase GmPycC (AC P0DV42) probably confers resistance to bacteriophage. The genes are probably only expressed in response to bacteriophage infection. Probably only responds to cUMP (produced by its cognate NTP cyclase), acts by impairing membrane integrity. The polypeptide is Pycsar effector protein GmPycTM (Gulbenkiania mobilis).